A 434-amino-acid chain; its full sequence is D-amino acid dehydrogenase (434 aa).

3–17 (VIVLGSGVIGTTTAY) contributes to the FAD binding site.

Belongs to the DadA oxidoreductase family. FAD serves as cofactor.

The enzyme catalyses a D-alpha-amino acid + A + H2O = a 2-oxocarboxylate + AH2 + NH4(+). In terms of biological role, oxidative deamination of D-amino acids. The polypeptide is D-amino acid dehydrogenase (Bordetella parapertussis (strain 12822 / ATCC BAA-587 / NCTC 13253)).